We begin with the raw amino-acid sequence, 609 residues long: All-trans-retinol 13,14-reductase (609 aa).

Positions 1–21 are cleaved as a signal peptide; the sequence is MWITALLLVVLLLVVVHRVYV.

It belongs to the carotenoid/retinoid oxidoreductase family. CrtISO subfamily. NAD(+) is required as a cofactor. Requires NADP(+) as cofactor. FAD serves as cofactor. Highly expressed in liver, kidney and heart.

It localises to the endoplasmic reticulum membrane. The enzyme catalyses all-trans-13,14-dihydroretinol + A = all-trans-retinol + AH2. Catalyzes the saturation of all-trans-retinol to all-trans-13,14-dihydroretinol. Does not exhibit any activity toward all-trans-retinoic acid, nor 9-cis, 11-cis or 13-cis-retinol isomers. May play a role in the metabolism of vitamin A. Independently of retinol conversion, may regulate liver metabolism upstream of MLXIPL/ChREBP. May play a role in adipocyte differentiation. This chain is All-trans-retinol 13,14-reductase (Retsat), found in Rattus norvegicus (Rat).